Reading from the N-terminus, the 168-residue chain is MTSRWIFGLVFLVCAGLLAVAFYMEHVMGLEPCPLCWLQRFGFMGAGLVSLLAFLHGPRGFGNRVYGLLLIVAAGAGLAVAGRQLWLQSLPADQVPACGPSVDYMLEVLPWFEVLQTALKGTGDCAEVVWRFLGLSIPGWTAVFFSLLIVLGLFVMLRRYSPRDWLQS.

The Cytoplasmic portion of the chain corresponds to 1–6 (MTSRWI). The helical transmembrane segment at 7-23 (FGLVFLVCAGLLAVAFY) threads the bilayer. The Periplasmic segment spans residues 24–41 (MEHVMGLEPCPLCWLQRF). A disulfide bond links Cys33 and Cys36. Residues 42 to 58 (GFMGAGLVSLLAFLHGP) form a helical membrane-spanning segment. Residues 59 to 65 (RGFGNRV) lie on the Cytoplasmic side of the membrane. A helical transmembrane segment spans residues 66–82 (YGLLLIVAAGAGLAVAG). Residues 83–139 (RQLWLQSLPADQVPACGPSVDYMLEVLPWFEVLQTALKGTGDCAEVVWRFLGLSIPG) lie on the Periplasmic side of the membrane. Residues Cys98 and Cys125 are joined by a disulfide bond. Residues 140–158 (WTAVFFSLLIVLGLFVMLR) form a helical membrane-spanning segment. The Cytoplasmic portion of the chain corresponds to 159–168 (RYSPRDWLQS).

The protein belongs to the DsbB family.

The protein resides in the cell inner membrane. In terms of biological role, required for disulfide bond formation in some periplasmic proteins. Acts by oxidizing the DsbA protein. This chain is Disulfide bond formation protein B, found in Marinobacter nauticus (strain ATCC 700491 / DSM 11845 / VT8) (Marinobacter aquaeolei).